Consider the following 473-residue polypeptide: Glycine--tRNA ligase (473 aa).

The substrate site is built by Arg101 and Glu172. Residues 204-206 (RNE), 214-219 (FRTREF), 289-290 (EL), and 333-336 (GVER) each bind ATP. 219 to 223 (FEQME) provides a ligand contact to substrate. Position 329-333 (329-333 (EPSVG)) interacts with substrate.

It belongs to the class-II aminoacyl-tRNA synthetase family. As to quaternary structure, homodimer.

The protein localises to the cytoplasm. It catalyses the reaction tRNA(Gly) + glycine + ATP = glycyl-tRNA(Gly) + AMP + diphosphate. In terms of biological role, catalyzes the attachment of glycine to tRNA(Gly). The chain is Glycine--tRNA ligase from Ureaplasma parvum serovar 3 (strain ATCC 27815 / 27 / NCTC 11736).